A 450-amino-acid chain; its full sequence is UDP-N-acetylmuramoylalanine--D-glutamate ligase (450 aa).

119 to 125 serves as a coordination point for ATP; that stretch reads GSNGKTT.

This sequence belongs to the MurCDEF family.

Its subcellular location is the cytoplasm. It catalyses the reaction UDP-N-acetyl-alpha-D-muramoyl-L-alanine + D-glutamate + ATP = UDP-N-acetyl-alpha-D-muramoyl-L-alanyl-D-glutamate + ADP + phosphate + H(+). It functions in the pathway cell wall biogenesis; peptidoglycan biosynthesis. In terms of biological role, cell wall formation. Catalyzes the addition of glutamate to the nucleotide precursor UDP-N-acetylmuramoyl-L-alanine (UMA). The polypeptide is UDP-N-acetylmuramoylalanine--D-glutamate ligase (Bacillus thuringiensis (strain Al Hakam)).